Consider the following 266-residue polypeptide: Type III pantothenate kinase (266 aa).

6–13 (DAGNTNIV) serves as a coordination point for ATP. Substrate-binding positions include Tyr100 and 107-110 (GADR). Asp109 acts as the Proton acceptor in catalysis. Asp129 provides a ligand contact to K(+). Residue Thr132 participates in ATP binding. A substrate-binding site is contributed by Thr184.

It belongs to the type III pantothenate kinase family. As to quaternary structure, homodimer. Requires NH4(+) as cofactor. K(+) serves as cofactor.

The protein resides in the cytoplasm. It carries out the reaction (R)-pantothenate + ATP = (R)-4'-phosphopantothenate + ADP + H(+). It participates in cofactor biosynthesis; coenzyme A biosynthesis; CoA from (R)-pantothenate: step 1/5. Catalyzes the phosphorylation of pantothenate (Pan), the first step in CoA biosynthesis. The sequence is that of Type III pantothenate kinase from Clostridium beijerinckii (strain ATCC 51743 / NCIMB 8052) (Clostridium acetobutylicum).